The primary structure comprises 289 residues: ATP synthase gamma chain (289 aa).

It belongs to the ATPase gamma chain family. In terms of assembly, F-type ATPases have 2 components, CF(1) - the catalytic core - and CF(0) - the membrane proton channel. CF(1) has five subunits: alpha(3), beta(3), gamma(1), delta(1), epsilon(1). CF(0) has three main subunits: a, b and c.

The protein resides in the cell inner membrane. Produces ATP from ADP in the presence of a proton gradient across the membrane. The gamma chain is believed to be important in regulating ATPase activity and the flow of protons through the CF(0) complex. The polypeptide is ATP synthase gamma chain (Azoarcus sp. (strain BH72)).